The chain runs to 318 residues: 4-hydroxy-3-methylbut-2-enyl diphosphate reductase (318 aa).

Cys-21 is a binding site for [4Fe-4S] cluster. His-50 and His-83 together coordinate (2E)-4-hydroxy-3-methylbut-2-enyl diphosphate. The dimethylallyl diphosphate site is built by His-50 and His-83. 2 residues coordinate isopentenyl diphosphate: His-50 and His-83. Cys-105 contacts [4Fe-4S] cluster. (2E)-4-hydroxy-3-methylbut-2-enyl diphosphate is bound at residue His-133. His-133 lines the dimethylallyl diphosphate pocket. Position 133 (His-133) interacts with isopentenyl diphosphate. Glu-135 functions as the Proton donor in the catalytic mechanism. Thr-176 contributes to the (2E)-4-hydroxy-3-methylbut-2-enyl diphosphate binding site. Cys-206 is a binding site for [4Fe-4S] cluster. Positions 234, 235, 236, and 278 each coordinate (2E)-4-hydroxy-3-methylbut-2-enyl diphosphate. 4 residues coordinate dimethylallyl diphosphate: Ser-234, Ser-235, Asn-236, and Ser-278. Isopentenyl diphosphate is bound by residues Ser-234, Ser-235, Asn-236, and Ser-278.

It belongs to the IspH family. It depends on [4Fe-4S] cluster as a cofactor.

The catalysed reaction is isopentenyl diphosphate + 2 oxidized [2Fe-2S]-[ferredoxin] + H2O = (2E)-4-hydroxy-3-methylbut-2-enyl diphosphate + 2 reduced [2Fe-2S]-[ferredoxin] + 2 H(+). The enzyme catalyses dimethylallyl diphosphate + 2 oxidized [2Fe-2S]-[ferredoxin] + H2O = (2E)-4-hydroxy-3-methylbut-2-enyl diphosphate + 2 reduced [2Fe-2S]-[ferredoxin] + 2 H(+). Its pathway is isoprenoid biosynthesis; dimethylallyl diphosphate biosynthesis; dimethylallyl diphosphate from (2E)-4-hydroxy-3-methylbutenyl diphosphate: step 1/1. The protein operates within isoprenoid biosynthesis; isopentenyl diphosphate biosynthesis via DXP pathway; isopentenyl diphosphate from 1-deoxy-D-xylulose 5-phosphate: step 6/6. Catalyzes the conversion of 1-hydroxy-2-methyl-2-(E)-butenyl 4-diphosphate (HMBPP) into a mixture of isopentenyl diphosphate (IPP) and dimethylallyl diphosphate (DMAPP). Acts in the terminal step of the DOXP/MEP pathway for isoprenoid precursor biosynthesis. The chain is 4-hydroxy-3-methylbut-2-enyl diphosphate reductase from Shewanella oneidensis (strain ATCC 700550 / JCM 31522 / CIP 106686 / LMG 19005 / NCIMB 14063 / MR-1).